We begin with the raw amino-acid sequence, 104 residues long: Large ribosomal subunit protein bL21 (104 aa).

It belongs to the bacterial ribosomal protein bL21 family. As to quaternary structure, part of the 50S ribosomal subunit. Contacts protein L20.

Its function is as follows. This protein binds to 23S rRNA in the presence of protein L20. The protein is Large ribosomal subunit protein bL21 of Clostridium tetani (strain Massachusetts / E88).